The chain runs to 510 residues: D-alanine--D-alanyl carrier protein ligase (510 aa).

Residue 157 to 158 participates in ATP binding; the sequence is TS. D202 contributes to the D-alanine binding site. Residue 297-302 coordinates ATP; sequence NTYGPT. V306 contacts D-alanine. ATP-binding residues include D389 and K498. Position 498 (K498) interacts with D-alanine.

Belongs to the ATP-dependent AMP-binding enzyme family. DltA subfamily.

The protein resides in the cytoplasm. It carries out the reaction holo-[D-alanyl-carrier protein] + D-alanine + ATP = D-alanyl-[D-alanyl-carrier protein] + AMP + diphosphate. It participates in cell wall biogenesis; lipoteichoic acid biosynthesis. Functionally, catalyzes the first step in the D-alanylation of lipoteichoic acid (LTA), the activation of D-alanine and its transfer onto the D-alanyl carrier protein (Dcp) DltC. In an ATP-dependent two-step reaction, forms a high energy D-alanyl-AMP intermediate, followed by transfer of the D-alanyl residue as a thiol ester to the phosphopantheinyl prosthetic group of the Dcp. D-alanylation of LTA plays an important role in modulating the properties of the cell wall in Gram-positive bacteria, influencing the net charge of the cell wall. This chain is D-alanine--D-alanyl carrier protein ligase, found in Listeria welshimeri serovar 6b (strain ATCC 35897 / DSM 20650 / CCUG 15529 / CIP 8149 / NCTC 11857 / SLCC 5334 / V8).